A 667-amino-acid polypeptide reads, in one-letter code: High affinity sulfate transporter 1 (667 aa).

Positions 16–38 (ETRSNSSSHRHGGGGGGDDTTSL) are disordered. The next 11 helical transmembrane spans lie at 106-126 (GDFI…LAYA), 131-151 (LDPW…AFMG), 156-176 (IAIG…SNEI), 185-205 (LRLA…LGVC), 208-228 (GFLI…GAAI), 269-289 (WETI…KYIA), 296-316 (FWVS…FVYI), 350-370 (GAGV…AIAI), 425-445 (VSNI…TPLF), 452-472 (VLAS…AMVL), and 486-506 (GAFF…AVAI). The 124-residue stretch at 537–660 (QYPKAAQIPG…LTVADAVATY (124 aa)) folds into the STAS domain.

Belongs to the SLC26A/SulP transporter (TC 2.A.53) family.

The protein resides in the membrane. High-affinity H(+)/sulfate cotransporter that mediates the uptake of sulfate by plant roots from low concentrations of sulfate in the soil solution. The protein is High affinity sulfate transporter 1 (ST1) of Stylosanthes hamata (Caribbean stylo).